A 122-amino-acid polypeptide reads, in one-letter code: Large ribosomal subunit protein uL14 (122 aa).

This sequence belongs to the universal ribosomal protein uL14 family. In terms of assembly, part of the 50S ribosomal subunit. Forms a cluster with proteins L3 and L19. In the 70S ribosome, L14 and L19 interact and together make contacts with the 16S rRNA in bridges B5 and B8.

Functionally, binds to 23S rRNA. Forms part of two intersubunit bridges in the 70S ribosome. This is Large ribosomal subunit protein uL14 from Brucella abortus (strain 2308).